A 107-amino-acid chain; its full sequence is Essential MCU regulator, mitochondrial (107 aa).

The N-terminal 47 residues, 1–47 (MASTAARRLAWVAVRPGALWSGPRGRRGGDVYTVPGSSGLSQVPSRS), are a transit peptide targeting the mitochondrion. The Mitochondrial matrix portion of the chain corresponds to 48–65 (VIVTRSGAILPKPVKMSF). Residues 66–85 (GLLRVFSIVIPFLYVGTLIS) form a helical membrane-spanning segment. Positions 81-85 (GTLIS) match the GXXXX[G/A/S] motif. Over 86-107 (KNFAALLEEHDIFVPEDDDDDD) the chain is Mitochondrial intermembrane.

Belongs to the SMDT1/EMRE family. Component of the uniplex complex, composed of MCU, EMRE/SMDT1, MICU1 and MICU2 (or MICU3) in a 4:4:1:1 stoichiometry. The number of EMRE/SMDT1 molecules is hovewer variable, ranging from 1 to 4 copies per uniplex complex, leading to uniplex complexes with distinct gatekeeping profiles. Interacts (via its C-terminal poly-Asp tail) with MCUR1; the interaction is direct. Unprocessed form interacts (via transit peptide) with MAIP1. Post-translationally, undergoes proteolytic degradation in neurons: degraded by AFG3L2 and SPG7 before SMDT1/EMRE assembly with the uniporter complex, limiting the availability of SMDT1/EMRE for MCU assembly and promoting efficient assembly of gatekeeper subunits with MCU. Widely expressed.

The protein resides in the mitochondrion inner membrane. In terms of biological role, essential regulatory subunit of the mitochondrial calcium uniporter complex (uniplex), a complex that mediates calcium uptake into mitochondria. Required to bridge the calcium-sensing proteins MICU1 with the calcium-conducting subunit MCU. Acts by mediating activation of MCU and retention of MICU1 to the MCU pore, in order to ensure tight regulation of the uniplex complex and appropriate responses to intracellular calcium signaling. The chain is Essential MCU regulator, mitochondrial from Mus musculus (Mouse).